Here is a 578-residue protein sequence, read N- to C-terminus: Putative ankyrin repeat protein FPV022 (578 aa).

ANK repeat units lie at residues 4–34, 38–67, 68–97, 100–129, 160–189, 222–251, 255–287, 320–349, 353–382, 386–415, and 419–449; these read RRKSAFKRAIDEDDVDIIRKLLSYKPIDLNK, KNRTILCRAVSMKSHKVAEFLLSNGSKMSA, CKVPPLIISVRNKDLTMAKILVSYGASVDV, KGETPLLTAIKTGYIEIIDYLLSLEPSGPY, YGHTALYYAVKKGNLSLIKLLVENKAITDN, EGTTALHYAVEAERLEAVRYLLDIGCDPKV, HSVSPLYYAIKRKNKIILDELIKFYTVEFMVNM, YLSELLYESIKTNNPEIVSLILGLGANINK, YGNIPLQTAIIYQTDNVFNLLLQKGADVNA, DGNTILHTLAACCKYKKIKLVLDLGSDINS, and NGRTPIEEACPCKKTIRTLISHLIIMIKKNK.

The sequence is that of Putative ankyrin repeat protein FPV022 from Fowlpox virus (strain NVSL) (FPV).